Consider the following 151-residue polypeptide: Deoxyuridine 5'-triphosphate nucleotidohydrolase (151 aa).

Residues 70–72 (RSG), asparagine 83, 87–89 (LID), and methionine 97 contribute to the substrate site.

This sequence belongs to the dUTPase family. It depends on Mg(2+) as a cofactor.

The enzyme catalyses dUTP + H2O = dUMP + diphosphate + H(+). Its pathway is pyrimidine metabolism; dUMP biosynthesis; dUMP from dCTP (dUTP route): step 2/2. Functionally, this enzyme is involved in nucleotide metabolism: it produces dUMP, the immediate precursor of thymidine nucleotides and it decreases the intracellular concentration of dUTP so that uracil cannot be incorporated into DNA. This Actinobacillus pleuropneumoniae serotype 7 (strain AP76) protein is Deoxyuridine 5'-triphosphate nucleotidohydrolase.